A 192-amino-acid chain; its full sequence is uncharacterized protein (192 aa).

This is an uncharacterized protein from Picosynechococcus sp. (strain ATCC 27264 / PCC 7002 / PR-6) (Agmenellum quadruplicatum).